A 346-amino-acid chain; its full sequence is 3-dehydroquinate synthase (346 aa).

NAD(+) contacts are provided by residues Asp62–Lys67, Gly96–Asp100, Thr120–Thr121, Lys133, Lys142, and Phe160–Thr163. Positions 175, 234, and 251 each coordinate Zn(2+).

This sequence belongs to the sugar phosphate cyclases superfamily. Dehydroquinate synthase family. Co(2+) serves as cofactor. Requires Zn(2+) as cofactor. The cofactor is NAD(+).

It localises to the cytoplasm. It carries out the reaction 7-phospho-2-dehydro-3-deoxy-D-arabino-heptonate = 3-dehydroquinate + phosphate. It participates in metabolic intermediate biosynthesis; chorismate biosynthesis; chorismate from D-erythrose 4-phosphate and phosphoenolpyruvate: step 2/7. Functionally, catalyzes the conversion of 3-deoxy-D-arabino-heptulosonate 7-phosphate (DAHP) to dehydroquinate (DHQ). The protein is 3-dehydroquinate synthase of Campylobacter curvus (strain 525.92).